Here is a 322-residue protein sequence, read N- to C-terminus: Eukaryotic translation initiation factor 3 subunit I (322 aa).

WD repeat units lie at residues 4-43 (GHERSITQIKYNREGDLLFSCSKDQKPNVWYSLNGERLGT), 46-85 (GHQGAVWCLDVDWETRKLITGAGDMTTKIWDVEYGTVIAS), 141-180 (MVESKITSMLWGPLDETIITGHDNGNIAIWDIRKGQKVVD), 184-223 (DHTAGINDMQLSKDGTMFVTASKDTTAKLFDSESLMCLKT), and 281-322 (GHFG…NIFE).

The protein belongs to the eIF-3 subunit I family. Component of the eukaryotic translation initiation factor 3 (eIF-3) complex. The eIF-3 complex interacts with pix.

The protein localises to the cytoplasm. Component of the eukaryotic translation initiation factor 3 (eIF-3) complex, which is involved in protein synthesis of a specialized repertoire of mRNAs and, together with other initiation factors, stimulates binding of mRNA and methionyl-tRNAi to the 40S ribosome. The eIF-3 complex specifically targets and initiates translation of a subset of mRNAs involved in cell proliferation. In Drosophila mojavensis (Fruit fly), this protein is Eukaryotic translation initiation factor 3 subunit I.